The chain runs to 168 residues: NADH dehydrogenase [ubiquinone] 1 alpha subcomplex assembly factor 2 (168 aa).

The tract at residues 112 to 168 (GKETSEELLPSPTATQVKGHASAPYFGREEPSVAPTSTGKTFQPGSWTPEDGKRQSQ) is disordered. Position 133 is a phosphoserine (S133). Polar residues predominate over residues 145–157 (APTSTGKTFQPGS).

The protein belongs to the complex I NDUFA12 subunit family. In terms of assembly, interacts with ARMC9.

The protein resides in the mitochondrion. Acts as a molecular chaperone for mitochondrial complex I assembly. Complex I functions in the transfer of electrons from NADH to the respiratory chain. The immediate electron acceptor for the enzyme is believed to be ubiquinone. Is involved in the initial steps of cilia formation, including removal of CP110 from the mother centrioles, docking of membrane vesicles to the mother centrioles, and establishment of the transition zone. This is NADH dehydrogenase [ubiquinone] 1 alpha subcomplex assembly factor 2 (Ndufaf2) from Mus musculus (Mouse).